The sequence spans 392 residues: 6-aminohexanoate-dimer hydrolase (392 aa).

Residues 1 to 27 (MNTPTTGSHPARYPSAAAGEPTLDSWQ) are disordered. Residue Ser-112 is part of the active site.

It catalyses the reaction [N-(6-aminohexanoyl)](n) + H2O = [N-(6-aminohexanoyl)](n-1) + 6-aminohexanoate. The enzyme catalyses N-(6-aminohexanoyl)-6-aminohexanoate + H2O = 2 6-aminohexanoate. It functions in the pathway xenobiotic degradation; nylon-6 oligomer degradation. Involved in nylon oligomer degradation. The protein is 6-aminohexanoate-dimer hydrolase of Paenarthrobacter ureafaciens.